A 490-amino-acid chain; its full sequence is Solute carrier family 2, facilitated glucose transporter member 1 (490 aa).

The Cytoplasmic segment spans residues methionine 1–arginine 10. Residues leucine 11 to isoleucine 32 traverse the membrane as a helical segment. The Extracellular portion of the chain corresponds to asparagine 33 to serine 65. A glycan (N-linked (GlcNAc...) asparagine) is linked at asparagine 44. A helical transmembrane segment spans residues leucine 66–valine 86. Residues asparagine 87–phenylalanine 89 lie on the Cytoplasmic side of the membrane. A helical transmembrane segment spans residues glycine 90 to phenylalanine 111. The Extracellular segment spans residues serine 112–glutamate 119. The helical transmembrane segment at methionine 120–valine 143 threads the bilayer. Residues glycine 144 to alanine 154 are Cytoplasmic-facing. The chain crosses the membrane as a helical span at residues leucine 155–leucine 175. Residue glutamine 160 participates in D-glucose binding. At aspartate 176–leucine 184 the chain is on the extracellular side. Residues tryptophan 185–phenylalanine 205 form a helical membrane-spanning segment. Residues alanine 206–proline 270 are Cytoplasmic-facing. Residues isoleucine 271–tyrosine 292 form a helical membrane-spanning segment. D-glucose is bound by residues glutamine 281–glutamine 282 and asparagine 287. Over serine 293 to proline 305 the chain is Extracellular. A helical transmembrane segment spans residues valine 306–valine 327. Asparagine 316 is a D-glucose binding site. Over glutamate 328–arginine 333 the chain is Cytoplasmic. The helical transmembrane segment at threonine 334–leucine 354 threads the bilayer. Topologically, residues threonine 355 to serine 364 are extracellular. A helical membrane pass occupies residues tyrosine 365–tryptophan 387. Positions 379 and 387 each coordinate D-glucose. Topologically, residues phenylalanine 388–proline 400 are cytoplasmic. A helical membrane pass occupies residues alanine 401–phenylalanine 421. Topologically, residues glutamine 422–cysteine 428 are extracellular. Residues glycine 429–phenylalanine 449 traverse the membrane as a helical segment. Over lysine 450–valine 490 the chain is Cytoplasmic. A disordered region spans residues glycine 470–valine 490.

Belongs to the major facilitator superfamily. Sugar transporter (TC 2.A.1.1) family. Glucose transporter subfamily. Interacts with isoform 1 of BSG. As to expression, retinal cones (at protein level).

It is found in the cell membrane. Its subcellular location is the photoreceptor inner segment. The catalysed reaction is D-glucose(out) = D-glucose(in). In terms of biological role, facilitative glucose transporter, which is responsible for constitutive or basal glucose uptake. Has a very broad substrate specificity; can transport a wide range of aldoses including both pentoses and hexoses. Most important energy carrier of the brain: present at the blood-brain barrier and assures the energy-independent, facilitative transport of glucose into the brain. In association with BSG and NXNL1, promotes retinal cone survival by increasing glucose uptake into photoreceptors. Required for mesendoderm differentiation. The protein is Solute carrier family 2, facilitated glucose transporter member 1 of Gallus gallus (Chicken).